Here is a 254-residue protein sequence, read N- to C-terminus: Imidazole glycerol phosphate synthase subunit HisF (254 aa).

Active-site residues include Asp-12 and Asp-131.

It belongs to the HisA/HisF family. As to quaternary structure, heterodimer of HisH and HisF.

It is found in the cytoplasm. The enzyme catalyses 5-[(5-phospho-1-deoxy-D-ribulos-1-ylimino)methylamino]-1-(5-phospho-beta-D-ribosyl)imidazole-4-carboxamide + L-glutamine = D-erythro-1-(imidazol-4-yl)glycerol 3-phosphate + 5-amino-1-(5-phospho-beta-D-ribosyl)imidazole-4-carboxamide + L-glutamate + H(+). The protein operates within amino-acid biosynthesis; L-histidine biosynthesis; L-histidine from 5-phospho-alpha-D-ribose 1-diphosphate: step 5/9. IGPS catalyzes the conversion of PRFAR and glutamine to IGP, AICAR and glutamate. The HisF subunit catalyzes the cyclization activity that produces IGP and AICAR from PRFAR using the ammonia provided by the HisH subunit. In Frankia casuarinae (strain DSM 45818 / CECT 9043 / HFP020203 / CcI3), this protein is Imidazole glycerol phosphate synthase subunit HisF.